Reading from the N-terminus, the 348-residue chain is 4-hydroxy-2-oxovalerate aldolase 3 (348 aa).

One can recognise a Pyruvate carboxyltransferase domain in the interval 8–260; the sequence is ITVHDMTLRD…ETGVDVWKIQ (253 aa). Residue 16–17 coordinates substrate; it reads RD. Residue D17 participates in Mn(2+) binding. H20 acts as the Proton acceptor in catalysis. Substrate-binding residues include S170 and H199. Mn(2+) contacts are provided by H199 and H201. Residue Y290 coordinates substrate.

Belongs to the 4-hydroxy-2-oxovalerate aldolase family.

The enzyme catalyses (S)-4-hydroxy-2-oxopentanoate = acetaldehyde + pyruvate. This is 4-hydroxy-2-oxovalerate aldolase 3 from Burkholderia lata (strain ATCC 17760 / DSM 23089 / LMG 22485 / NCIMB 9086 / R18194 / 383).